Here is a 193-residue protein sequence, read N- to C-terminus: 7-methyl-GTP pyrophosphatase (193 aa).

D69 acts as the Proton acceptor in catalysis.

Belongs to the Maf family. YceF subfamily. A divalent metal cation is required as a cofactor.

The protein localises to the cytoplasm. It catalyses the reaction N(7)-methyl-GTP + H2O = N(7)-methyl-GMP + diphosphate + H(+). In terms of biological role, nucleoside triphosphate pyrophosphatase that hydrolyzes 7-methyl-GTP (m(7)GTP). May have a dual role in cell division arrest and in preventing the incorporation of modified nucleotides into cellular nucleic acids. The polypeptide is 7-methyl-GTP pyrophosphatase (Chromohalobacter salexigens (strain ATCC BAA-138 / DSM 3043 / CIP 106854 / NCIMB 13768 / 1H11)).